The primary structure comprises 85 residues: Large ribosomal subunit protein bL31B (85 aa).

It belongs to the bacterial ribosomal protein bL31 family. Type B subfamily. As to quaternary structure, part of the 50S ribosomal subunit.

This chain is Large ribosomal subunit protein bL31B, found in Porphyromonas gingivalis (strain ATCC 33277 / DSM 20709 / CIP 103683 / JCM 12257 / NCTC 11834 / 2561).